Reading from the N-terminus, the 938-residue chain is Protein NLP3 (938 aa).

Disordered stretches follow at residues 1 to 26 (MEVDPSSSLPGAGEGGGGGIGGGGGD) and 557 to 597 (LADD…KAEK). The span at 12-26 (AGEGGGGGIGGGGGD) shows a compositional bias: gly residues. Positions 580–597 (SLHKSNKPPERRRGKAEK) are enriched in basic and acidic residues. Positions 585 to 666 (NKPPERRRGK…IESVQGSDAA (82 aa)) constitute an RWP-RK domain. The stretch at 640–662 (SRKINKVNRSLSKLKQVIESVQG) forms a coiled coil. Residues 743–769 (DKASHSRSSSGEGSINSRTSEASCHGS) form a disordered region. A compositionally biased stretch (low complexity) spans 748-762 (SRSSSGEGSINSRTS). The region spanning 847–926 (TVTIKASFKE…HVIRLLVSDV (80 aa)) is the PB1 domain.

It is found in the nucleus. Its function is as follows. Probable transcription factor. This is Protein NLP3 (NLP3) from Oryza sativa subsp. japonica (Rice).